Here is a 103-residue protein sequence, read N- to C-terminus: UPF0235 protein Rleg2_3707 (103 aa).

This sequence belongs to the UPF0235 family.

The chain is UPF0235 protein Rleg2_3707 from Rhizobium leguminosarum bv. trifolii (strain WSM2304).